Here is a 159-residue protein sequence, read N- to C-terminus: Ribosomal RNA large subunit methyltransferase H (159 aa).

S-adenosyl-L-methionine-binding positions include L76, G108, and 127 to 132; that span reads FSKMTF.

This sequence belongs to the RNA methyltransferase RlmH family. As to quaternary structure, homodimer.

The protein resides in the cytoplasm. The enzyme catalyses pseudouridine(1915) in 23S rRNA + S-adenosyl-L-methionine = N(3)-methylpseudouridine(1915) in 23S rRNA + S-adenosyl-L-homocysteine + H(+). Specifically methylates the pseudouridine at position 1915 (m3Psi1915) in 23S rRNA. The protein is Ribosomal RNA large subunit methyltransferase H of Clostridium tetani (strain Massachusetts / E88).